Consider the following 556-residue polypeptide: Arginine--tRNA ligase (556 aa).

The short motif at 132–142 (ANPTGDLHLGH) is the 'HIGH' region element.

This sequence belongs to the class-I aminoacyl-tRNA synthetase family. In terms of assembly, monomer.

Its subcellular location is the cytoplasm. The catalysed reaction is tRNA(Arg) + L-arginine + ATP = L-arginyl-tRNA(Arg) + AMP + diphosphate. This Bacillus cereus (strain ATCC 10987 / NRS 248) protein is Arginine--tRNA ligase.